Reading from the N-terminus, the 236-residue chain is Biosynthetic peptidoglycan transglycosylase (236 aa).

Residues Ala12–Pro31 form a helical membrane-spanning segment.

This sequence belongs to the glycosyltransferase 51 family.

Its subcellular location is the cell inner membrane. It carries out the reaction [GlcNAc-(1-&gt;4)-Mur2Ac(oyl-L-Ala-gamma-D-Glu-L-Lys-D-Ala-D-Ala)](n)-di-trans,octa-cis-undecaprenyl diphosphate + beta-D-GlcNAc-(1-&gt;4)-Mur2Ac(oyl-L-Ala-gamma-D-Glu-L-Lys-D-Ala-D-Ala)-di-trans,octa-cis-undecaprenyl diphosphate = [GlcNAc-(1-&gt;4)-Mur2Ac(oyl-L-Ala-gamma-D-Glu-L-Lys-D-Ala-D-Ala)](n+1)-di-trans,octa-cis-undecaprenyl diphosphate + di-trans,octa-cis-undecaprenyl diphosphate + H(+). The protein operates within cell wall biogenesis; peptidoglycan biosynthesis. Its function is as follows. Peptidoglycan polymerase that catalyzes glycan chain elongation from lipid-linked precursors. This Pseudomonas syringae pv. tomato (strain ATCC BAA-871 / DC3000) protein is Biosynthetic peptidoglycan transglycosylase.